Consider the following 203-residue polypeptide: SPbeta prophage-derived uncharacterized protein YouA (203 aa).

Residues 1 to 23 are disordered; sequence MAFLNQDGDKYTSAKDDGTGNPI. Positions 7–18 are enriched in basic and acidic residues; the sequence is DGDKYTSAKDDG.

The protein is SPbeta prophage-derived uncharacterized protein YouA (youA) of Bacillus subtilis (strain 168).